We begin with the raw amino-acid sequence, 108 residues long: Bublin coiled-coil protein (108 aa).

Disordered stretches follow at residues 1-23 (MSGP…DDDF) and 67-108 (RLEF…DEGS). Residues 25 to 73 (SEEYEAINSMLDQINSYLDDLEERNDSLNGKLHELMESNRQARLEFRAQ) are a coiled coil. Over residues 99–108 (ENDKKIDEGS) the composition is skewed to basic and acidic residues.

It belongs to the UPF0184 (EST00098) family.

Its subcellular location is the cell junction. The protein localises to the cytoplasm. It localises to the cytoskeleton. Essential for intermediate filament organization in intestinal cells, interacts with intermediate filament and regulates intestinal lumen morphology. The polypeptide is Bublin coiled-coil protein (bbln) (Takifugu rubripes (Japanese pufferfish)).